Reading from the N-terminus, the 152-residue chain is Calmodulin (152 aa).

A2 is modified (N-acetylalanine). 4 EF-hand domains span residues 10-45, 46-81, 83-118, and 119-152; these read EQIA…LGQN, PTEA…KMQD, DTEE…LGEK, and LTNE…IVRN. The Ca(2+) site is built by D23, D25, D27, S29, E34, D59, D61, N63, N65, E70, D96, D98, N100, Y102, E107, D132, D134, D136, Q138, and E143.

Belongs to the calmodulin family. As to quaternary structure, interacts with cmbB, numA/nucleomorphin, pgkA/phosphoglycerate kinase, and thyB/thymidine kinase in the presence of Ca(2+). Interacts with dwwA in the absence of Ca(2+). In terms of processing, the N-terminus is blocked. Trimethylation of Lys-118 observed in other calmodulins is absent here.

Its subcellular location is the contractile vacuole. Functionally, calmodulin mediates the control of a large number of enzymes, ion channels and other proteins by Ca(2+). Among the enzymes to be stimulated by the calmodulin-Ca(2+) complex are a number of protein kinases and phosphatases. In Dictyostelium discoideum (Social amoeba), this protein is Calmodulin (calA).